Reading from the N-terminus, the 848-residue chain is Paramyosin (848 aa).

A nonhelical region region spans residues 1 to 9 (AFGSMSVAD). Residues 10-833 (LGSLTRLEDK…HLIRAKHRSS (824 aa)) adopt a coiled-coil conformation. Residues 834 to 848 (VVTGKNASASKIYVL) form a nonhelical region region.

It belongs to the paramyosin family. In terms of assembly, homodimer.

Its subcellular location is the cytoplasm. The protein resides in the myofibril. Its function is as follows. Paramyosin is a major structural component of many thick filaments isolated from invertebrate muscles. This is Paramyosin from Dirofilaria immitis (Canine heartworm).